The sequence spans 316 residues: tRNA uridine(34) hydroxylase (316 aa).

Residues Leu123–Glu217 enclose the Rhodanese domain. Residue Cys177 is the Cysteine persulfide intermediate of the active site.

This sequence belongs to the TrhO family.

It catalyses the reaction uridine(34) in tRNA + AH2 + O2 = 5-hydroxyuridine(34) in tRNA + A + H2O. Catalyzes oxygen-dependent 5-hydroxyuridine (ho5U) modification at position 34 in tRNAs. This is tRNA uridine(34) hydroxylase from Enterococcus faecalis (strain ATCC 700802 / V583).